A 318-amino-acid polypeptide reads, in one-letter code: Fibronectin type III domain-containing protein 11 (318 aa).

The Fibronectin type-III domain maps to 210–307 (VVFDRKASAA…DSLTLHTKPE (98 aa)).

The polypeptide is Fibronectin type III domain-containing protein 11 (FNDC11) (Homo sapiens (Human)).